We begin with the raw amino-acid sequence, 380 residues long: MTGFRVGVGDGIPAARPAAETMTRANYLGAVANRVDSFWVPDHLNQLFPRSLWKQKYCGATKLIPRVDAVMEPWTMLGHIAARNRAGRLRLGVAVTDSGRRNPAVTAQAAATLHLLTRGRAILGIGPGEREGNEPYGVDWSKPVARFEEAMATIRALWDSGGELVNRDSPFFPLRKAIFDLPPYRGKWPEIWIAAHGPRMLRAAGRYADAYFPSFAHLPTEYAQRLDSVRSAASDVGRDPMAILPAVQMFVVTGSTRDDVDEALDSELLRAFGLNASDDVFTRHGGRHPMGAGFSGAQDLLPHDMDEQTALSHVAVIPPGVTREFLLNGTSDEVIQQAAQWRDCVRYMVLVNVSFLQRNLRKGLMSVKPFNKIVRELKKL.

The protein belongs to the mer family. Phthiodiolone/phenolphthiodiolone dimycocerosates ketoreductase subfamily.

Catalyzes the reduction of the keto moiety of phthiodiolone dimycocerosates (DIM B) and glycosylated phenolphthiodiolone dimycocerosates to form the intermediate compounds phthiotriol and glycosylated phenolphthiotriol dimycocerosates during phthiocerol dimycocerosates (DIM A) and glycosylated phenolphthiocerol dimycocerosates (PGL) biosynthesis. The chain is Phthiodiolone/phenolphthiodiolone dimycocerosates ketoreductase from Mycobacterium sp. (strain JLS).